A 414-amino-acid chain; its full sequence is Serine--tRNA ligase (414 aa).

L-serine is bound at residue T230–E232. An ATP-binding site is contributed by R261–E263. E284 is a binding site for L-serine. Residue E348–S351 coordinates ATP. S382 lines the L-serine pocket.

Belongs to the class-II aminoacyl-tRNA synthetase family. Type-1 seryl-tRNA synthetase subfamily. Homodimer. The tRNA molecule binds across the dimer.

The protein localises to the cytoplasm. The catalysed reaction is tRNA(Ser) + L-serine + ATP = L-seryl-tRNA(Ser) + AMP + diphosphate + H(+). It catalyses the reaction tRNA(Sec) + L-serine + ATP = L-seryl-tRNA(Sec) + AMP + diphosphate + H(+). The protein operates within aminoacyl-tRNA biosynthesis; selenocysteinyl-tRNA(Sec) biosynthesis; L-seryl-tRNA(Sec) from L-serine and tRNA(Sec): step 1/1. In terms of biological role, catalyzes the attachment of serine to tRNA(Ser). Is also able to aminoacylate tRNA(Sec) with serine, to form the misacylated tRNA L-seryl-tRNA(Sec), which will be further converted into selenocysteinyl-tRNA(Sec). This chain is Serine--tRNA ligase, found in Nitratiruptor sp. (strain SB155-2).